Reading from the N-terminus, the 117-residue chain is Immunoglobulin kappa variable 1D-12 (117 aa).

A signal peptide spans 1 to 22 (MDMMVPAQLLGLLLLWFPGSRC). Positions 23–45 (DIQMTQSPSSVSASVGDRVTITC) are framework-1. An Ig-like domain is found at 24 to 117 (IQMTQSPSSV…YYCQQANSFP (94 aa)). Cysteines 45 and 110 form a disulfide. Residues 46–56 (RASQGISSWLA) form a complementarity-determining-1 region. The framework-2 stretch occupies residues 57 to 71 (WYQQKPGKAPKLLIY). The complementarity-determining-2 stretch occupies residues 72–78 (AASSLQS). A framework-3 region spans residues 79-110 (GVPSRFSGSGSGTDFTLTISSLQPEDFATYYC). Residues 111-117 (QQANSFP) are complementarity-determining-3.

As to quaternary structure, immunoglobulins are composed of two identical heavy chains and two identical light chains; disulfide-linked.

The protein localises to the secreted. It is found in the cell membrane. V region of the variable domain of immunoglobulin light chains that participates in the antigen recognition. Immunoglobulins, also known as antibodies, are membrane-bound or secreted glycoproteins produced by B lymphocytes. In the recognition phase of humoral immunity, the membrane-bound immunoglobulins serve as receptors which, upon binding of a specific antigen, trigger the clonal expansion and differentiation of B lymphocytes into immunoglobulins-secreting plasma cells. Secreted immunoglobulins mediate the effector phase of humoral immunity, which results in the elimination of bound antigens. The antigen binding site is formed by the variable domain of one heavy chain, together with that of its associated light chain. Thus, each immunoglobulin has two antigen binding sites with remarkable affinity for a particular antigen. The variable domains are assembled by a process called V-(D)-J rearrangement and can then be subjected to somatic hypermutations which, after exposure to antigen and selection, allow affinity maturation for a particular antigen. This is Immunoglobulin kappa variable 1D-12 from Homo sapiens (Human).